Here is a 451-residue protein sequence, read N- to C-terminus: uncharacterized protein (451 aa).

The 59-residue stretch at 2 to 60 (VVKVKQKIPLKIKRMGINGEGIGFYQKTLVFVPGALKGEDIFCQITAVKRNFAEAKLLT) folds into the TRAM domain. 4 residues coordinate [4Fe-4S] cluster: C73, C79, C82, and C162. 4 residues coordinate S-adenosyl-L-methionine: Q283, Y312, D333, and D381. Catalysis depends on C408, which acts as the Nucleophile.

This sequence belongs to the class I-like SAM-binding methyltransferase superfamily. RNA M5U methyltransferase family.

This is an uncharacterized protein from Streptococcus pyogenes serotype M1.